Reading from the N-terminus, the 355-residue chain is Uroporphyrinogen decarboxylase (355 aa).

Residues 27 to 31 (RQAGR), aspartate 77, tyrosine 154, threonine 209, and histidine 327 contribute to the substrate site.

This sequence belongs to the uroporphyrinogen decarboxylase family. In terms of assembly, homodimer.

The protein localises to the cytoplasm. It catalyses the reaction uroporphyrinogen III + 4 H(+) = coproporphyrinogen III + 4 CO2. Its pathway is porphyrin-containing compound metabolism; protoporphyrin-IX biosynthesis; coproporphyrinogen-III from 5-aminolevulinate: step 4/4. In terms of biological role, catalyzes the decarboxylation of four acetate groups of uroporphyrinogen-III to yield coproporphyrinogen-III. The chain is Uroporphyrinogen decarboxylase from Yersinia enterocolitica serotype O:8 / biotype 1B (strain NCTC 13174 / 8081).